Here is a 362-residue protein sequence, read N- to C-terminus: Phospho-N-acetylmuramoyl-pentapeptide-transferase (362 aa).

10 helical membrane passes run 21–41 (YITF…FLLG), 75–95 (TMGG…WADL), 100–120 (VWAV…DDFL), 136–156 (LVVQ…LMPG), 170–190 (LMIP…MGAS), 201–221 (GLAI…AYLV), 225–245 (IFSH…AVFC), 247–267 (ALIG…AVFM), 290–310 (IVLA…IVQV), and 339–359 (TVVI…LATL).

This sequence belongs to the glycosyltransferase 4 family. MraY subfamily. The cofactor is Mg(2+).

Its subcellular location is the cell inner membrane. The enzyme catalyses UDP-N-acetyl-alpha-D-muramoyl-L-alanyl-gamma-D-glutamyl-meso-2,6-diaminopimeloyl-D-alanyl-D-alanine + di-trans,octa-cis-undecaprenyl phosphate = di-trans,octa-cis-undecaprenyl diphospho-N-acetyl-alpha-D-muramoyl-L-alanyl-D-glutamyl-meso-2,6-diaminopimeloyl-D-alanyl-D-alanine + UMP. It participates in cell wall biogenesis; peptidoglycan biosynthesis. Functionally, catalyzes the initial step of the lipid cycle reactions in the biosynthesis of the cell wall peptidoglycan: transfers peptidoglycan precursor phospho-MurNAc-pentapeptide from UDP-MurNAc-pentapeptide onto the lipid carrier undecaprenyl phosphate, yielding undecaprenyl-pyrophosphoryl-MurNAc-pentapeptide, known as lipid I. In Acidiphilium cryptum (strain JF-5), this protein is Phospho-N-acetylmuramoyl-pentapeptide-transferase.